Here is a 246-residue protein sequence, read N- to C-terminus: Proteolipid protein DM gamma (246 aa).

The next 4 membrane-spanning stretches (helical) occupy residues 19-35, 71-87, 118-134, and 206-222; these read LLAT…FCGC, VIYG…IILL, VFLT…VFGF, and FIVA…ALLI.

This sequence belongs to the myelin proteolipid protein family. Highly expressed in white matter in myelinating shark brain.

The protein localises to the membrane. In Squalus acanthias (Spiny dogfish), this protein is Proteolipid protein DM gamma.